Consider the following 536-residue polypeptide: Protein ST7 homolog (536 aa).

2 helical membrane passes run 3-23 (CSWT…LFFL) and 49-69 (FYVA…IFEW). Residues 192-219 (AEEDTETVAQAENVLRRALRAIENTLST) are a coiled coil. A helical transmembrane segment spans residues 464 to 484 (STLGMLIQTFACLAICILAVL).

This sequence belongs to the ST7 family.

It is found in the membrane. The protein is Protein ST7 homolog of Caenorhabditis briggsae.